Reading from the N-terminus, the 157-residue chain is Transcriptional repressor NrdR (157 aa).

A disordered region spans residues 1-26 (MRCPKCGGSKSSVIDSRQAEDGNTIR). A zinc finger lies at 3–34 (CPKCGGSKSSVIDSRQAEDGNTIRRRRECEDC). Over residues 17–26 (RQAEDGNTIR) the composition is skewed to basic and acidic residues. Positions 49–139 (LVVVKKDGTR…VYRSFKDVGE (91 aa)) constitute an ATP-cone domain.

It belongs to the NrdR family. Zn(2+) is required as a cofactor.

Its function is as follows. Negatively regulates transcription of bacterial ribonucleotide reductase nrd genes and operons by binding to NrdR-boxes. This chain is Transcriptional repressor NrdR, found in Streptococcus gordonii (strain Challis / ATCC 35105 / BCRC 15272 / CH1 / DL1 / V288).